The sequence spans 599 residues: Fumarate reductase flavoprotein subunit (599 aa).

Residues 12–16 (GAGGG), 36–38 (VSK), 44–52 (THTVAAEGG), 156–158 (HFV), and Asp212 contribute to the FAD site. Residue His45 is modified to Tele-8alpha-FAD histidine. Active-site residues include His233 and Arg249. FAD is bound by residues 357-358 (HY), Glu381, and 392-398 (RLGSNSL).

This sequence belongs to the FAD-dependent oxidoreductase 2 family. FRD/SDH subfamily. In terms of assembly, part of an enzyme complex containing four subunits: a flavoprotein (FrdA), an iron-sulfur protein (FrdB), and two hydrophobic anchor proteins (FrdC and FrdD). Requires FAD as cofactor.

The protein resides in the cell inner membrane. The catalysed reaction is a quinone + succinate = fumarate + a quinol. The enzyme catalyses a menaquinone + succinate = a menaquinol + fumarate. This chain is Fumarate reductase flavoprotein subunit (frdA), found in Haemophilus influenzae (strain ATCC 51907 / DSM 11121 / KW20 / Rd).